The following is a 396-amino-acid chain: S-adenosylmethionine synthase (396 aa).

Residue H16 participates in ATP binding. D18 lines the Mg(2+) pocket. Residue E44 coordinates K(+). L-methionine contacts are provided by E57 and Q100. A flexible loop region spans residues Q100 to E110. ATP contacts are provided by residues D175–K177, R242–F243, D251, R257–K258, A274, and K278. D251 contacts L-methionine. K282 serves as a coordination point for L-methionine.

This sequence belongs to the AdoMet synthase family. Homotetramer; dimer of dimers. The cofactor is Mg(2+). K(+) is required as a cofactor.

It localises to the cytoplasm. The enzyme catalyses L-methionine + ATP + H2O = S-adenosyl-L-methionine + phosphate + diphosphate. It participates in amino-acid biosynthesis; S-adenosyl-L-methionine biosynthesis; S-adenosyl-L-methionine from L-methionine: step 1/1. Catalyzes the formation of S-adenosylmethionine (AdoMet) from methionine and ATP. The overall synthetic reaction is composed of two sequential steps, AdoMet formation and the subsequent tripolyphosphate hydrolysis which occurs prior to release of AdoMet from the enzyme. The sequence is that of S-adenosylmethionine synthase from Streptococcus suis (strain 05ZYH33).